Consider the following 231-residue polypeptide: Chromosome partition protein MukE (231 aa).

The segment at 195-231 (MIRDGEAMPVEGSLSLKDDSDDNDRTDDTAPETGEDE) is disordered. A compositionally biased stretch (acidic residues) spans 213–231 (DSDDNDRTDDTAPETGEDE).

Belongs to the MukE family. Interacts, and probably forms a ternary complex, with MukF and MukB. The complex formation is stimulated by calcium or magnesium.

It localises to the cytoplasm. The protein localises to the nucleoid. Functionally, involved in chromosome condensation, segregation and cell cycle progression. May participate in facilitating chromosome segregation by condensation DNA from both sides of a centrally located replisome during cell division. Probably acts via its interaction with MukB and MukF. In Pectobacterium atrosepticum (strain SCRI 1043 / ATCC BAA-672) (Erwinia carotovora subsp. atroseptica), this protein is Chromosome partition protein MukE.